The chain runs to 581 residues: Polypeptide N-acetylgalactosaminyltransferase 12 (581 aa).

At 1–19 (MWGRTARRRCPRELRRGRE) the chain is on the cytoplasmic side. The helical; Signal-anchor for type II membrane protein transmembrane segment at 20–37 (ALLVLLALLALAGLGSVL) threads the bilayer. The Lumenal portion of the chain corresponds to 38 to 581 (RAQRGAGAGA…QKWFFKERML (544 aa)). The tract at residues 43 to 67 (AGAGAAEPGPPRTPRPGRREPVMPR) is disordered. Disulfide bonds link Cys-125-Cys-358, Cys-349-Cys-422, Cys-458-Cys-479, Cys-506-Cys-521, and Cys-547-Cys-566. The interval 135 to 244 (LPRTSVIIAF…EGWLEPLLQR (110 aa)) is catalytic subdomain A. Positions 176 and 205 each coordinate substrate. Mn(2+) contacts are provided by Asp-228 and His-230. Residues 304–366 (VIRSPTMAGG…PCSHVGHVFP (63 aa)) form a catalytic subdomain B region. Trp-335 contributes to the substrate binding site. Residue His-363 participates in Mn(2+) binding. Residue Tyr-371 participates in substrate binding. A Ricin B-type lectin domain is found at 445–577 (FFGMLQNKGL…NSDHQKWFFK (133 aa)).

Belongs to the glycosyltransferase 2 family. GalNAc-T subfamily. Requires Mn(2+) as cofactor. In terms of tissue distribution, widely expressed at different levels of expression. Highly expressed in digestive organs such as small intestine, stomach, pancreas and colon. Expressed at intermediate level in testis, thyroid gland and spleen. Weakly expressed in whole brain, cerebral cortex, cerebellum, fetal brain, bone marrow, thymus, leukocytes, heart, skeletal muscle, liver, lung, esophagus, kidney, adrenal gland, mammary gland, uterus, placenta, ovary and prostate.

The protein localises to the golgi apparatus membrane. It catalyses the reaction L-seryl-[protein] + UDP-N-acetyl-alpha-D-galactosamine = a 3-O-[N-acetyl-alpha-D-galactosaminyl]-L-seryl-[protein] + UDP + H(+). It carries out the reaction L-threonyl-[protein] + UDP-N-acetyl-alpha-D-galactosamine = a 3-O-[N-acetyl-alpha-D-galactosaminyl]-L-threonyl-[protein] + UDP + H(+). The protein operates within protein modification; protein glycosylation. Catalyzes the initial reaction in O-linked oligosaccharide biosynthesis, the transfer of an N-acetyl-D-galactosamine residue to a serine or threonine residue on the protein receptor. Has activity toward non-glycosylated peptides such as Muc5AC, Muc1a and EA2, and no detectable activity with Muc2 and Muc7. Displays enzymatic activity toward the Gal-NAc-Muc5AC glycopeptide, but no detectable activity to mono-GalNAc-glycosylated Muc1a, Muc2, Muc7 and EA2. May play an important role in the initial step of mucin-type oligosaccharide biosynthesis in digestive organs. The polypeptide is Polypeptide N-acetylgalactosaminyltransferase 12 (GALNT12) (Homo sapiens (Human)).